We begin with the raw amino-acid sequence, 217 residues long: Ribosomal RNA small subunit methyltransferase G (217 aa).

Residues glycine 76, phenylalanine 81, 128–129 (LE), and arginine 142 each bind S-adenosyl-L-methionine.

Belongs to the methyltransferase superfamily. RNA methyltransferase RsmG family.

The protein resides in the cytoplasm. It carries out the reaction guanosine(527) in 16S rRNA + S-adenosyl-L-methionine = N(7)-methylguanosine(527) in 16S rRNA + S-adenosyl-L-homocysteine. Functionally, specifically methylates the N7 position of guanine in position 527 of 16S rRNA. In Rhizorhabdus wittichii (strain DSM 6014 / CCUG 31198 / JCM 15750 / NBRC 105917 / EY 4224 / RW1) (Sphingomonas wittichii), this protein is Ribosomal RNA small subunit methyltransferase G.